Consider the following 244-residue polypeptide: Uridylate kinase (244 aa).

ATP is bound at residue 18 to 21; sequence KISG. The interval 26-31 is involved in allosteric activation by GTP; that stretch reads GDQGYG. Gly60 contacts UMP. ATP is bound by residues Gly61 and Arg65. UMP-binding positions include Asp80 and 141–148; that span reads TGNPYFTT. Thr168, Tyr174, and Asp177 together coordinate ATP.

The protein belongs to the UMP kinase family. In terms of assembly, homohexamer.

It is found in the cytoplasm. It carries out the reaction UMP + ATP = UDP + ADP. It functions in the pathway pyrimidine metabolism; CTP biosynthesis via de novo pathway; UDP from UMP (UMPK route): step 1/1. With respect to regulation, allosterically activated by GTP. Inhibited by UTP. Functionally, catalyzes the reversible phosphorylation of UMP to UDP. This Paracoccus denitrificans (strain Pd 1222) protein is Uridylate kinase.